The primary structure comprises 271 residues: Phosphatidylglycerol--prolipoprotein diacylglyceryl transferase (271 aa).

Helical transmembrane passes span 21 to 41, 60 to 80, 95 to 115, 124 to 144, 176 to 196, 203 to 223, and 230 to 250; these read ISVR…MWLA, LLFA…VLFY, VWTG…AMLW, FFGV…VGRL, SQLY…NWFI, GSVS…VEYV, and LGLF…MIIG. Arg-143 serves as a coordination point for a 1,2-diacyl-sn-glycero-3-phospho-(1'-sn-glycerol).

The protein belongs to the Lgt family.

The protein localises to the cell inner membrane. It carries out the reaction L-cysteinyl-[prolipoprotein] + a 1,2-diacyl-sn-glycero-3-phospho-(1'-sn-glycerol) = an S-1,2-diacyl-sn-glyceryl-L-cysteinyl-[prolipoprotein] + sn-glycerol 1-phosphate + H(+). It participates in protein modification; lipoprotein biosynthesis (diacylglyceryl transfer). Its function is as follows. Catalyzes the transfer of the diacylglyceryl group from phosphatidylglycerol to the sulfhydryl group of the N-terminal cysteine of a prolipoprotein, the first step in the formation of mature lipoproteins. The polypeptide is Phosphatidylglycerol--prolipoprotein diacylglyceryl transferase (Vibrio vulnificus (strain YJ016)).